Consider the following 328-residue polypeptide: DNA-directed RNA polymerase subunit alpha (328 aa).

The segment at 1-244 (MEKFLKYEIK…EHLNPIVSVN (244 aa)) is alpha N-terminal domain (alpha-NTD). Residues 261-328 (KVKSFAKQIE…VQELGLKFRS (68 aa)) are alpha C-terminal domain (alpha-CTD).

This sequence belongs to the RNA polymerase alpha chain family. In terms of assembly, homodimer. The RNAP catalytic core consists of 2 alpha, 1 beta, 1 beta' and 1 omega subunit. When a sigma factor is associated with the core the holoenzyme is formed, which can initiate transcription.

It carries out the reaction RNA(n) + a ribonucleoside 5'-triphosphate = RNA(n+1) + diphosphate. Functionally, DNA-dependent RNA polymerase catalyzes the transcription of DNA into RNA using the four ribonucleoside triphosphates as substrates. The chain is DNA-directed RNA polymerase subunit alpha from Mycoplasma genitalium (strain ATCC 33530 / DSM 19775 / NCTC 10195 / G37) (Mycoplasmoides genitalium).